The chain runs to 212 residues: Uridine kinase (212 aa).

13 to 20 lines the ATP pocket; that stretch reads GASASGKS.

It belongs to the uridine kinase family.

The protein localises to the cytoplasm. It catalyses the reaction uridine + ATP = UMP + ADP + H(+). The catalysed reaction is cytidine + ATP = CMP + ADP + H(+). It participates in pyrimidine metabolism; CTP biosynthesis via salvage pathway; CTP from cytidine: step 1/3. The protein operates within pyrimidine metabolism; UMP biosynthesis via salvage pathway; UMP from uridine: step 1/1. In Shewanella baltica (strain OS155 / ATCC BAA-1091), this protein is Uridine kinase.